The following is a 254-amino-acid chain: uncharacterized protein (254 aa).

Residues 163–182 form a disordered region; that stretch reads PNKHTQHKRSTRRTSPKDYN. Over residues 166 to 176 the composition is skewed to basic residues; it reads HTQHKRSTRRT. Residues 207 to 227 form a helical membrane-spanning segment; that stretch reads AHSAWILIIIIIIIVVILFFF.

It belongs to the RL11 family.

It is found in the host membrane. This is an uncharacterized protein from Human cytomegalovirus (strain Merlin) (HHV-5).